The following is a 66-amino-acid chain: Large ribosomal subunit protein bL35 (66 aa).

The protein belongs to the bacterial ribosomal protein bL35 family.

The polypeptide is Large ribosomal subunit protein bL35 (Treponema denticola (strain ATCC 35405 / DSM 14222 / CIP 103919 / JCM 8153 / KCTC 15104)).